A 208-amino-acid chain; its full sequence is Ubiquitin-conjugating enzyme E2 S (208 aa).

Residues 14–160 enclose the UBC core domain; it reads QTIRQVMKEL…ARMMTEIHAQ (147 aa). Cys-98 serves as the catalytic Glycyl thioester intermediate. The interval 161 to 196 is disordered; that stretch reads PAKCGAGASDAKDDDGPSTKKHAGVDKKLQDKKKEK. Residues 170–196 show a composition bias toward basic and acidic residues; it reads DAKDDDGPSTKKHAGVDKKLQDKKKEK.

This sequence belongs to the ubiquitin-conjugating enzyme family.

It carries out the reaction S-ubiquitinyl-[E1 ubiquitin-activating enzyme]-L-cysteine + [E2 ubiquitin-conjugating enzyme]-L-cysteine = [E1 ubiquitin-activating enzyme]-L-cysteine + S-ubiquitinyl-[E2 ubiquitin-conjugating enzyme]-L-cysteine.. It participates in protein modification; protein ubiquitination. In terms of biological role, catalyzes the covalent attachment of ubiquitin to other proteins. Acts as an essential factor of the anaphase promoting complex/cyclosome (APC/C), a cell cycle-regulated ubiquitin ligase that controls progression through mitosis. Acts by specifically elongating polyubiquitin chains initiated by the E2 enzyme vih/UbcH10 on APC/C substrates, enhancing the degradation of APC/C substrates by the proteasome and promoting mitotic exit. The protein is Ubiquitin-conjugating enzyme E2 S of Drosophila grimshawi (Hawaiian fruit fly).